Reading from the N-terminus, the 185-residue chain is Ribosome-recycling factor (185 aa).

The protein belongs to the RRF family.

The protein localises to the cytoplasm. In terms of biological role, responsible for the release of ribosomes from messenger RNA at the termination of protein biosynthesis. May increase the efficiency of translation by recycling ribosomes from one round of translation to another. The protein is Ribosome-recycling factor of Teredinibacter turnerae (strain ATCC 39867 / T7901).